A 599-amino-acid polypeptide reads, in one-letter code: Tryptophan 2-C-methyltransferase (599 aa).

The B12-binding domain occupies 4-149 (KGTVALINPN…RALAEGRSAD (146 aa)). Residues 167 to 197 (RVAPPALDPRAAPAPSSSPSPSPAPSSSSAP) form a disordered region. Over residues 168 to 181 (VAPPALDPRAAPAP) the composition is skewed to low complexity. The Radical SAM core domain occupies 239-492 (YREGGLGSIL…IEYERQFMFD (254 aa)). Residues C253, C257, and C260 each coordinate [4Fe-4S] cluster.

The cofactor is [4Fe-4S] cluster. Cob(II)alamin serves as cofactor.

The enzyme catalyses L-tryptophan + S-adenosyl-L-methionine = 2-methyl-L-tryptophan + S-adenosyl-L-homocysteine + H(+). Functionally, involved in the biosynthetic pathway of the antibiotic thiostrepton A. First, TsrM catalyzes the transfer of a methyl group from S-adenosyl methionine (SAM) to cobalamin, leading to the formation of methylcobalamin (CH3-cobalamin) and S-adenosyl-L-homocysteine (SAH). Then the methyl group is transferred to the C2 position of tryptophan (Trp) with the concerted action of the radical SAM [4Fe-4S] center, leading to the production of methyltryptophan. This is Tryptophan 2-C-methyltransferase from Streptomyces laurentii.